Here is a 217-residue protein sequence, read N- to C-terminus: Small ribosomal subunit protein uS3 (217 aa).

The region spanning 38–106 (IRKFINKELA…QVHINIIEIK (69 aa)) is the KH type-2 domain.

This sequence belongs to the universal ribosomal protein uS3 family. As to quaternary structure, part of the 30S ribosomal subunit. Forms a tight complex with proteins S10 and S14.

Binds the lower part of the 30S subunit head. Binds mRNA in the 70S ribosome, positioning it for translation. This Streptococcus equi subsp. equi (strain 4047) protein is Small ribosomal subunit protein uS3.